The primary structure comprises 433 residues: 5-methylthioadenosine/S-adenosylhomocysteine deaminase (433 aa).

Positions 67 and 69 each coordinate Zn(2+). Substrate is bound by residues Glu96, Arg148, Arg158, and His186. A Zn(2+)-binding site is contributed by His213. Glu216 and Asp301 together coordinate substrate. Residue Asp301 participates in Zn(2+) binding.

This sequence belongs to the metallo-dependent hydrolases superfamily. MTA/SAH deaminase family. It depends on Zn(2+) as a cofactor.

The enzyme catalyses S-adenosyl-L-homocysteine + H2O + H(+) = S-inosyl-L-homocysteine + NH4(+). It catalyses the reaction S-methyl-5'-thioadenosine + H2O + H(+) = S-methyl-5'-thioinosine + NH4(+). Catalyzes the deamination of 5-methylthioadenosine and S-adenosyl-L-homocysteine into 5-methylthioinosine and S-inosyl-L-homocysteine, respectively. Is also able to deaminate adenosine. The polypeptide is 5-methylthioadenosine/S-adenosylhomocysteine deaminase (Pelotomaculum thermopropionicum (strain DSM 13744 / JCM 10971 / SI)).